A 260-amino-acid polypeptide reads, in one-letter code: Thiazole synthase (260 aa).

The active-site Schiff-base intermediate with DXP is the Lys100. Residues Gly161, 187-188 (AG), and 209-210 (NT) each bind 1-deoxy-D-xylulose 5-phosphate.

The protein belongs to the ThiG family. In terms of assembly, homotetramer. Forms heterodimers with either ThiH or ThiS.

It localises to the cytoplasm. It carries out the reaction [ThiS sulfur-carrier protein]-C-terminal-Gly-aminoethanethioate + 2-iminoacetate + 1-deoxy-D-xylulose 5-phosphate = [ThiS sulfur-carrier protein]-C-terminal Gly-Gly + 2-[(2R,5Z)-2-carboxy-4-methylthiazol-5(2H)-ylidene]ethyl phosphate + 2 H2O + H(+). Its pathway is cofactor biosynthesis; thiamine diphosphate biosynthesis. Functionally, catalyzes the rearrangement of 1-deoxy-D-xylulose 5-phosphate (DXP) to produce the thiazole phosphate moiety of thiamine. Sulfur is provided by the thiocarboxylate moiety of the carrier protein ThiS. In vitro, sulfur can be provided by H(2)S. The protein is Thiazole synthase of Dechloromonas aromatica (strain RCB).